Reading from the N-terminus, the 167-residue chain is Bacterial non-heme ferritin-like protein (167 aa).

The region spanning 1–145 (MATAGMLLKL…TILDEVRSAK (145 aa)) is the Ferritin-like diiron domain.

Belongs to the ferritin family. Prokaryotic subfamily.

Its subcellular location is the cytoplasm. This is Bacterial non-heme ferritin-like protein (ftnB) from Escherichia coli O157:H7.